The following is a 222-amino-acid chain: Leucyl/phenylalanyl-tRNA--protein transferase (222 aa).

Belongs to the L/F-transferase family.

The protein resides in the cytoplasm. The enzyme catalyses N-terminal L-lysyl-[protein] + L-leucyl-tRNA(Leu) = N-terminal L-leucyl-L-lysyl-[protein] + tRNA(Leu) + H(+). The catalysed reaction is N-terminal L-arginyl-[protein] + L-leucyl-tRNA(Leu) = N-terminal L-leucyl-L-arginyl-[protein] + tRNA(Leu) + H(+). It catalyses the reaction L-phenylalanyl-tRNA(Phe) + an N-terminal L-alpha-aminoacyl-[protein] = an N-terminal L-phenylalanyl-L-alpha-aminoacyl-[protein] + tRNA(Phe). Its function is as follows. Functions in the N-end rule pathway of protein degradation where it conjugates Leu, Phe and, less efficiently, Met from aminoacyl-tRNAs to the N-termini of proteins containing an N-terminal arginine or lysine. The sequence is that of Leucyl/phenylalanyl-tRNA--protein transferase from Legionella pneumophila (strain Lens).